The chain runs to 153 residues: UPF0178 protein MXAN_5526 (153 aa).

This sequence belongs to the UPF0178 family.

The sequence is that of UPF0178 protein MXAN_5526 from Myxococcus xanthus (strain DK1622).